The primary structure comprises 211 residues: Small ribosomal subunit protein uS3 (211 aa).

The 69-residue stretch at 39–107 (VTKYVESSFA…VPSLNVVEVK (69 aa)) folds into the KH type-2 domain.

Belongs to the universal ribosomal protein uS3 family. In terms of assembly, part of the 30S ribosomal subunit. Forms a tight complex with proteins S10 and S14.

In terms of biological role, binds the lower part of the 30S subunit head. Binds mRNA in the 70S ribosome, positioning it for translation. The polypeptide is Small ribosomal subunit protein uS3 (Neorickettsia sennetsu (strain ATCC VR-367 / Miyayama) (Ehrlichia sennetsu)).